We begin with the raw amino-acid sequence, 195 residues long: Cytochrome c oxidase subunit 1 (195 aa).

Residues 12 to 32 (MYWVLGFIFLFTLGGLTGIVL) form a helical membrane-spanning segment. His42 and Asp43 together coordinate Mg(2+). His50 serves as a coordination point for heme a3. Position 52 (His52) interacts with Fe(II)-heme a. 3 helical membrane passes run 59 to 79 (AVFA…GLVL), 88 to 108 (FIVM…LGLA), and 131 to 151 (GSLM…EAFL).

It belongs to the heme-copper respiratory oxidase family. In terms of assembly, component of the cytochrome c oxidase (complex IV, CIV), a multisubunit enzyme composed of a catalytic core of 3 subunits and several supernumerary subunits. The complex exists as a monomer or a dimer and forms supercomplexes (SCs) in the inner mitochondrial membrane with ubiquinol-cytochrome c oxidoreductase (cytochrome b-c1 complex, complex III, CIII). Requires heme as cofactor. It depends on Cu cation as a cofactor.

It is found in the mitochondrion inner membrane. It carries out the reaction 4 Fe(II)-[cytochrome c] + O2 + 8 H(+)(in) = 4 Fe(III)-[cytochrome c] + 2 H2O + 4 H(+)(out). The protein operates within energy metabolism; oxidative phosphorylation. Functionally, component of the cytochrome c oxidase, the last enzyme in the mitochondrial electron transport chain which drives oxidative phosphorylation. The respiratory chain contains 3 multisubunit complexes succinate dehydrogenase (complex II, CII), ubiquinol-cytochrome c oxidoreductase (cytochrome b-c1 complex, complex III, CIII) and cytochrome c oxidase (complex IV, CIV), that cooperate to transfer electrons derived from NADH and succinate to molecular oxygen, creating an electrochemical gradient over the inner membrane that drives transmembrane transport and the ATP synthase. Cytochrome c oxidase is the component of the respiratory chain that catalyzes the reduction of oxygen to water. Electrons originating from reduced cytochrome c in the intermembrane space (IMS) are transferred via the dinuclear copper A center (CU(A)) of subunit 2 and heme A of subunit 1 to the active site in subunit 1, a binuclear center (BNC) formed by heme A3 and copper B (CU(B)). The BNC reduces molecular oxygen to 2 water molecules using 4 electrons from cytochrome c in the IMS and 4 protons from the mitochondrial matrix. The chain is Cytochrome c oxidase subunit 1 (COI) from Albinaria turrita (Door snail).